A 423-amino-acid chain; its full sequence is Glutamate-1-semialdehyde 2,1-aminomutase (423 aa).

Residue K259 is modified to N6-(pyridoxal phosphate)lysine.

Belongs to the class-III pyridoxal-phosphate-dependent aminotransferase family. HemL subfamily. Homodimer. It depends on pyridoxal 5'-phosphate as a cofactor.

The protein localises to the cytoplasm. It carries out the reaction (S)-4-amino-5-oxopentanoate = 5-aminolevulinate. Its pathway is porphyrin-containing compound metabolism; protoporphyrin-IX biosynthesis; 5-aminolevulinate from L-glutamyl-tRNA(Glu): step 2/2. The chain is Glutamate-1-semialdehyde 2,1-aminomutase from Thermosipho africanus (strain TCF52B).